We begin with the raw amino-acid sequence, 278 residues long: HTH-type transcriptional activator RhaS (278 aa).

The HTH araC/xylS-type domain occupies 174 to 272; the sequence is NQLMAWLEDH…NWSPRDIRQG (99 aa). 2 consecutive DNA-binding regions (H-T-H motif) follow at residues 191-212 and 239-262; these read EAVA…KQHT and VTEI…RREF.

In terms of assembly, binds DNA as a dimer.

It localises to the cytoplasm. Functionally, activates expression of the rhaBAD and rhaT operons. The protein is HTH-type transcriptional activator RhaS of Salmonella arizonae (strain ATCC BAA-731 / CDC346-86 / RSK2980).